A 476-amino-acid polypeptide reads, in one-letter code: Aspartyl/glutamyl-tRNA(Asn/Gln) amidotransferase subunit B (476 aa).

Belongs to the GatB/GatE family. GatB subfamily. Heterotrimer of A, B and C subunits.

The enzyme catalyses L-glutamyl-tRNA(Gln) + L-glutamine + ATP + H2O = L-glutaminyl-tRNA(Gln) + L-glutamate + ADP + phosphate + H(+). It carries out the reaction L-aspartyl-tRNA(Asn) + L-glutamine + ATP + H2O = L-asparaginyl-tRNA(Asn) + L-glutamate + ADP + phosphate + 2 H(+). Functionally, allows the formation of correctly charged Asn-tRNA(Asn) or Gln-tRNA(Gln) through the transamidation of misacylated Asp-tRNA(Asn) or Glu-tRNA(Gln) in organisms which lack either or both of asparaginyl-tRNA or glutaminyl-tRNA synthetases. The reaction takes place in the presence of glutamine and ATP through an activated phospho-Asp-tRNA(Asn) or phospho-Glu-tRNA(Gln). This is Aspartyl/glutamyl-tRNA(Asn/Gln) amidotransferase subunit B from Latilactobacillus sakei subsp. sakei (strain 23K) (Lactobacillus sakei subsp. sakei).